Consider the following 231-residue polypeptide: Somatolactin-1 (231 aa).

Residues 1–24 (MRMIRAIKQGQWAVLLWPYLLTAS) form the signal peptide. 3 disulfides stabilise this stretch: Cys-29–Cys-39, Cys-89–Cys-205, and Cys-222–Cys-230. N-linked (GlcNAc...) asparagine glycosylation occurs at Asn-145.

It belongs to the somatotropin/prolactin family. Pituitary gland.

It localises to the secreted. The protein is Somatolactin-1 of Sparus aurata (Gilthead sea bream).